A 104-amino-acid polypeptide reads, in one-letter code: Integration host factor subunit alpha (104 aa).

The tract at residues glycine 51 to glutamate 70 is disordered.

The protein belongs to the bacterial histone-like protein family. Heterodimer of an alpha and a beta chain.

This protein is one of the two subunits of integration host factor, a specific DNA-binding protein that functions in genetic recombination as well as in transcriptional and translational control. This Ralstonia nicotianae (strain ATCC BAA-1114 / GMI1000) (Ralstonia solanacearum) protein is Integration host factor subunit alpha.